A 211-amino-acid chain; its full sequence is Neuroendocrine protein 7B2 (211 aa).

A signal peptide spans 1-26 (MVSRMVSTMLSGLLFWLASGWTPAFA). Positions 106-132 (DFSEDQGYPDPPNPCPVGKTDDGCLEN) are disordered. A disulfide bridge connects residues C120 and C129. Residues S140 and S204 each carry the phosphoserine modification. The segment at 173–211 (GGERRKRRSVNPYLQGQRLDNVVAKKSVPHFSDEDKDPE) is disordered.

Belongs to the 7B2 family. Interacts with PCSK2/PC2 early in the secretory pathway. Dissociation occurs at later stages. In terms of processing, proteolytically cleaved in the Golgi by a furin-like convertase to generate bioactive peptides. Post-translationally, sulfated on tyrosine residues.

The protein resides in the secreted. In terms of biological role, acts as a molecular chaperone for PCSK2/PC2, preventing its premature activation in the regulated secretory pathway. Binds to inactive PCSK2 in the endoplasmic reticulum and facilitates its transport from there to later compartments of the secretory pathway where it is proteolytically matured and activated. Also required for cleavage of PCSK2 but does not appear to be involved in its folding. Plays a role in regulating pituitary hormone secretion. The C-terminal peptide inhibits PCSK2 in vitro. The protein is Neuroendocrine protein 7B2 (SCG5) of Pan troglodytes (Chimpanzee).